Here is a 305-residue protein sequence, read N- to C-terminus: Ornithine carbamoyltransferase (305 aa).

Carbamoyl phosphate-binding positions include 50–53, Gln77, Arg101, and 128–131; these read STRT and HPCQ. Residues Asn159, Asp222, and 226–227 contribute to the L-ornithine site; that span reads SM. Carbamoyl phosphate is bound by residues 262–263 and Arg290; that span reads CL.

Belongs to the aspartate/ornithine carbamoyltransferase superfamily. OTCase family.

Its subcellular location is the cytoplasm. It carries out the reaction carbamoyl phosphate + L-ornithine = L-citrulline + phosphate + H(+). It participates in amino-acid biosynthesis; L-arginine biosynthesis; L-arginine from L-ornithine and carbamoyl phosphate: step 1/3. Its function is as follows. Reversibly catalyzes the transfer of the carbamoyl group from carbamoyl phosphate (CP) to the N(epsilon) atom of ornithine (ORN) to produce L-citrulline. The sequence is that of Ornithine carbamoyltransferase from Synechococcus elongatus (strain ATCC 33912 / PCC 7942 / FACHB-805) (Anacystis nidulans R2).